The primary structure comprises 1127 residues: Inactive phospholipase C-like protein 2 (1127 aa).

Gly residues predominate over residues 1 to 11 (MAECGRGGAAG). Residues 1–128 (MAECGRGGAA…KKTVSFSSMP (128 aa)) form a disordered region. At alanine 2 the chain carries N-acetylalanine. Serine 17 is modified (phosphoserine). Residues 19–31 (GPALGAKGALKAG) are compositionally biased toward low complexity. Over residues 32-42 (VGEGGGGGGRL) the composition is skewed to gly residues. Position 84 is a phosphothreonine (threonine 84). The region spanning 141–251 (NSMVEGSELK…WVTGLRYLIS (111 aa)) is the PH domain. The 145-residue stretch at 426-570 (QDMKQPLSHY…LKGKILIKAK (145 aa)) folds into the PI-PLC X-box domain. Threonine 584 carries the phosphothreonine modification. The region spanning 618–734 (LSELVSICKS…GYVLRPAIMR (117 aa)) is the PI-PLC Y-box domain. Residues 734-863 (REEVSFFSAN…TGYRHVPLQS (130 aa)) form the C2 domain. Residues 1101–1127 (GTENADVQKPRRSLEVIPEKANDETGE) are disordered. The span at 1106–1127 (DVQKPRRSLEVIPEKANDETGE) shows a compositional bias: basic and acidic residues. Residue serine 1113 is modified to Phosphoserine.

The protein resides in the cytoplasm. Its function is as follows. May play an role in the regulation of Ins(1,4,5)P3 around the endoplasmic reticulum. This chain is Inactive phospholipase C-like protein 2 (PLCL2), found in Homo sapiens (Human).